Reading from the N-terminus, the 192-residue chain is UPF0301 protein Bcen_0382 (192 aa).

Belongs to the UPF0301 (AlgH) family.

The chain is UPF0301 protein Bcen_0382 from Burkholderia orbicola (strain AU 1054).